Consider the following 866-residue polypeptide: Autophagy-related protein 9 (866 aa).

At M1–W94 the chain is on the cytoplasmic side. Residues A95–V115 traverse the membrane as a helical segment. Over D116 to T153 the chain is Lumenal. The helical transmembrane segment at L154–F174 threads the bilayer. Over L175–R319 the chain is Cytoplasmic. The stretch at L320–V340 is an intramembrane region. Residues Y341–S404 are Cytoplasmic-facing. Residues I405–A425 form a helical membrane-spanning segment. Residues F426–E433 lie on the Lumenal side of the membrane. A helical membrane pass occupies residues G434–I454. Over S455–G507 the chain is Cytoplasmic. Residues M508–V528 lie within the membrane without spanning it. The Cytoplasmic portion of the chain corresponds to P529–R866. Residues Q744–N781 are disordered. A compositionally biased stretch (polar residues) spans N768–N781.

Belongs to the ATG9 family. In terms of assembly, homotrimer; forms a homotrimer with a central pore that forms a path between the two membrane leaflets. In terms of tissue distribution, expressed in roots, leaves, stems and flowers.

It localises to the preautophagosomal structure membrane. Functionally, phospholipid scramblase involved in autophagy by mediating autophagosomal membrane expansion. Cycles between the preautophagosomal structure/phagophore assembly site (PAS) and the cytoplasmic vesicle pool and supplies membrane for the growing autophagosome. Lipid scramblase activity plays a key role in preautophagosomal structure/phagophore assembly by distributing the phospholipids that arrive through ATG2 from the cytoplasmic to the luminal leaflet of the bilayer, thereby driving autophagosomal membrane expansion. In addition to autophagy, also plays a role in necrotic cell death. Plays an essential role in plant nutrient recycling. This is Autophagy-related protein 9 from Arabidopsis thaliana (Mouse-ear cress).